The sequence spans 471 residues: Putative multidrug resistance protein MdtD (471 aa).

The Periplasmic portion of the chain corresponds to 1–11; that stretch reads MTDLPDSTRWQ. The chain crosses the membrane as a helical span at residues 12 to 32; that stretch reads LWIVAFGFFMQSLDTTIVNTA. Topologically, residues 33 to 48 are cytoplasmic; that stretch reads LPSMAQSLGESPLHMH. Residues 49–69 traverse the membrane as a helical segment; that stretch reads MVIVSYVLTVAVMLPASGWLA. At 70 to 76 the chain is on the periplasmic side; the sequence is DKVGVRN. A helical membrane pass occupies residues 77-97; that stretch reads IFFTAIVLFTLGSLFCALSGT. The Cytoplasmic segment spans residues 98-101; the sequence is LNEL. Residues 102–124 form a helical membrane-spanning segment; it reads LLARALQGVGGAMMVPVGRLTVM. The Periplasmic portion of the chain corresponds to 125–137; the sequence is KIVPREQYMAAMT. The chain crosses the membrane as a helical span at residues 138–158; that stretch reads FVTLPGQVGPLLGPALGGLLV. At 159 to 164 the chain is on the cytoplasmic side; sequence EYASWH. A helical membrane pass occupies residues 165 to 185; that stretch reads WIFLINIPVGIIGAIATLLLM. Residues 186–196 are Periplasmic-facing; sequence PNYTMQTWRFD. Residues 197–217 traverse the membrane as a helical segment; it reads LSGFLLLAVGMAVLTLALDGS. At 218–224 the chain is on the cytoplasmic side; the sequence is KGTGLSP. A helical transmembrane segment spans residues 225–245; the sequence is LAIAGLVAVGVVALVLYLLHA. At 246–262 the chain is on the periplasmic side; that stretch reads RNNNRALFSLKLFRTRT. A helical membrane pass occupies residues 263–283; sequence FSLGLAGSFAGRIGSGMLPFM. At 284–285 the chain is on the cytoplasmic side; the sequence is TP. A helical membrane pass occupies residues 286 to 306; it reads VFLQIGLGFSPFHAGLMMIPM. Residues 307–341 are Periplasmic-facing; the sequence is VLGSMGMKRIVVQVVNRFGYRRVLVATTLGLSLVT. A helical membrane pass occupies residues 342–362; that stretch reads LLFMTTALLGWYYVLPFVLFL. The Cytoplasmic segment spans residues 363 to 395; it reads QGMVNSTRFSSMNTLTLKDLPDNLASSGNSLLS. The chain crosses the membrane as a helical span at residues 396 to 416; it reads MIMQLSMSIGVTIAGLLLGLF. The Periplasmic portion of the chain corresponds to 417–430; the sequence is GSQHVSVDSGTTQT. A helical membrane pass occupies residues 431-451; the sequence is VFMYTWLSMALIIALPAFIFA. Residues 452 to 471 lie on the Cytoplasmic side of the membrane; the sequence is RVPNDTHQNVAISRRKRSAQ.

This sequence belongs to the major facilitator superfamily. TCR/Tet family.

Its subcellular location is the cell inner membrane. In Shigella boydii serotype 4 (strain Sb227), this protein is Putative multidrug resistance protein MdtD.